A 260-amino-acid chain; its full sequence is Indole-3-glycerol phosphate synthase (260 aa).

The protein belongs to the TrpC family.

It catalyses the reaction 1-(2-carboxyphenylamino)-1-deoxy-D-ribulose 5-phosphate + H(+) = (1S,2R)-1-C-(indol-3-yl)glycerol 3-phosphate + CO2 + H2O. The protein operates within amino-acid biosynthesis; L-tryptophan biosynthesis; L-tryptophan from chorismate: step 4/5. This Neisseria meningitidis serogroup C / serotype 2a (strain ATCC 700532 / DSM 15464 / FAM18) protein is Indole-3-glycerol phosphate synthase.